Reading from the N-terminus, the 108-residue chain is Class I hydrophobin eas (108 aa).

A signal peptide spans 1-26; the sequence is MQFTSVFTILAIAMTAAAAPAEVVPR. Cystine bridges form between cysteine 35/cysteine 86, cysteine 44/cysteine 80, cysteine 45/cysteine 71, and cysteine 87/cysteine 106.

This sequence belongs to the fungal hydrophobin family. As to quaternary structure, self-assembles to form functional amyloid fibrils called rodlets. Self-assembly into fibrillar rodlets occurs spontaneously at hydrophobic:hydrophilic interfaces and the rodlets further associate laterally to form amphipathic monolayers.

The protein localises to the secreted. The protein resides in the spore wall. Its function is as follows. Aerial growth, conidiation, and dispersal of filamentous fungi in the environment rely upon a capability of their secreting small amphipathic proteins called hydrophobins (HPBs) with low sequence identity. Class I can self-assemble into an outermost layer of rodlet bundles on aerial cell surfaces, conferring cellular hydrophobicity that supports fungal growth, development and dispersal; whereas class II form highly ordered films at water-air interfaces through intermolecular interactions but contribute nothing to the rodlet structure. Eas is a class I hydrophobin that forms functional amyloid fibrils called rodlets that facilitate spore formation and dispersal. This chain is Class I hydrophobin eas, found in Neurospora crassa (strain ATCC 24698 / 74-OR23-1A / CBS 708.71 / DSM 1257 / FGSC 987).